The sequence spans 268 residues: Endonuclease 8 1 (268 aa).

The active-site Schiff-base intermediate with DNA is Pro-2. The active-site Proton donor is Glu-3. The Proton donor; for beta-elimination activity role is filled by Lys-52. DNA contacts are provided by Arg-125 and Asn-166. Residues 234-268 (YVYRRAGEPCRVCGGVIRTALLEGRNVFWCPVCQT) form an FPG-type zinc finger. Arg-258 functions as the Proton donor; for delta-elimination activity in the catalytic mechanism.

The protein belongs to the FPG family. The cofactor is Zn(2+).

It catalyses the reaction 2'-deoxyribonucleotide-(2'-deoxyribose 5'-phosphate)-2'-deoxyribonucleotide-DNA = a 3'-end 2'-deoxyribonucleotide-(2,3-dehydro-2,3-deoxyribose 5'-phosphate)-DNA + a 5'-end 5'-phospho-2'-deoxyribonucleoside-DNA + H(+). Involved in base excision repair of DNA damaged by oxidation or by mutagenic agents. Acts as a DNA glycosylase that recognizes and removes damaged bases. Has AP (apurinic/apyrimidinic) lyase activity and introduces nicks in the DNA strand. Cleaves the DNA backbone by beta-delta elimination to generate a single-strand break at the site of the removed base with both 3'- and 5'-phosphates. The protein is Endonuclease 8 1 (nei1) of Mycobacterium bovis (strain ATCC BAA-935 / AF2122/97).